The following is a 178-amino-acid chain: UPF0302 protein BCAH187_A1683 (178 aa).

The protein belongs to the UPF0302 family.

The sequence is that of UPF0302 protein BCAH187_A1683 from Bacillus cereus (strain AH187).